A 529-amino-acid polypeptide reads, in one-letter code: Bifunctional purine biosynthesis protein PurH (529 aa).

An MGS-like domain is found at 2 to 149 (TDLSPVRRAL…KNHAFVNVVV (148 aa)).

This sequence belongs to the PurH family.

It carries out the reaction (6R)-10-formyltetrahydrofolate + 5-amino-1-(5-phospho-beta-D-ribosyl)imidazole-4-carboxamide = 5-formamido-1-(5-phospho-D-ribosyl)imidazole-4-carboxamide + (6S)-5,6,7,8-tetrahydrofolate. The enzyme catalyses IMP + H2O = 5-formamido-1-(5-phospho-D-ribosyl)imidazole-4-carboxamide. Its pathway is purine metabolism; IMP biosynthesis via de novo pathway; 5-formamido-1-(5-phospho-D-ribosyl)imidazole-4-carboxamide from 5-amino-1-(5-phospho-D-ribosyl)imidazole-4-carboxamide (10-formyl THF route): step 1/1. It participates in purine metabolism; IMP biosynthesis via de novo pathway; IMP from 5-formamido-1-(5-phospho-D-ribosyl)imidazole-4-carboxamide: step 1/1. This chain is Bifunctional purine biosynthesis protein PurH, found in Ruegeria pomeroyi (strain ATCC 700808 / DSM 15171 / DSS-3) (Silicibacter pomeroyi).